The primary structure comprises 317 residues: Transaldolase (317 aa).

The active-site Schiff-base intermediate with substrate is the Lys-132.

The protein belongs to the transaldolase family. Type 1 subfamily. In terms of assembly, homodimer.

The protein localises to the cytoplasm. It catalyses the reaction D-sedoheptulose 7-phosphate + D-glyceraldehyde 3-phosphate = D-erythrose 4-phosphate + beta-D-fructose 6-phosphate. It functions in the pathway carbohydrate degradation; pentose phosphate pathway; D-glyceraldehyde 3-phosphate and beta-D-fructose 6-phosphate from D-ribose 5-phosphate and D-xylulose 5-phosphate (non-oxidative stage): step 2/3. Transaldolase is important for the balance of metabolites in the pentose-phosphate pathway. This is Transaldolase from Photorhabdus laumondii subsp. laumondii (strain DSM 15139 / CIP 105565 / TT01) (Photorhabdus luminescens subsp. laumondii).